An 86-amino-acid polypeptide reads, in one-letter code: Large ribosomal subunit protein bL31 (86 aa).

Residues 65–86 (YGMGSANSATSKEQKEEKDSKK) are disordered. Over residues 76–86 (KEQKEEKDSKK) the composition is skewed to basic and acidic residues.

Belongs to the bacterial ribosomal protein bL31 family. Type A subfamily. As to quaternary structure, part of the 50S ribosomal subunit.

Functionally, binds the 23S rRNA. The protein is Large ribosomal subunit protein bL31 of Prochlorococcus marinus (strain AS9601).